Reading from the N-terminus, the 164-residue chain is Phosphopantetheine adenylyltransferase (164 aa).

Substrate is bound at residue Ser-10. ATP is bound by residues 10–11 and His-18; that span reads SF. Lys-42, Leu-74, and Arg-88 together coordinate substrate. ATP contacts are provided by residues 89–91, Glu-99, and 124–130; these read GLR and YSFLSSS.

This sequence belongs to the bacterial CoaD family. Homohexamer. The cofactor is Mg(2+).

Its subcellular location is the cytoplasm. The enzyme catalyses (R)-4'-phosphopantetheine + ATP + H(+) = 3'-dephospho-CoA + diphosphate. It functions in the pathway cofactor biosynthesis; coenzyme A biosynthesis; CoA from (R)-pantothenate: step 4/5. Functionally, reversibly transfers an adenylyl group from ATP to 4'-phosphopantetheine, yielding dephospho-CoA (dPCoA) and pyrophosphate. The chain is Phosphopantetheine adenylyltransferase from Exiguobacterium sibiricum (strain DSM 17290 / CCUG 55495 / CIP 109462 / JCM 13490 / 255-15).